A 143-amino-acid chain; its full sequence is MASGSRTTILPQSKEALLKSYNARLKDDVRSMLENFEEILKLARRESHSQISKTTQCEQDALEMQVRAANMVRAGESLMKLVADLKQYLILNDFHSVNEAITNNSQLFRNTQSECDKKLMKLRDEMAMDLYDLEEEYYTSIFK.

This sequence belongs to the Mediator complex subunit 22 family. As to quaternary structure, component of the Mediator complex, which includes at least CDK8, MED4, MED6, MED11, MED14, MED17, MED18, MED20, MED21, MED22, MED27, MED28, MED30 and MED31.

Its subcellular location is the nucleus. Functionally, component of the Mediator complex, a coactivator involved in the regulated transcription of nearly all RNA polymerase II-dependent genes. Mediator functions as a bridge to convey information from gene-specific regulatory proteins to the basal RNA polymerase II transcription machinery. Mediator is recruited to promoters by direct interactions with regulatory proteins and serves as a scaffold for the assembly of a functional preinitiation complex with RNA polymerase II and the general transcription factors. This is Mediator of RNA polymerase II transcription subunit 22 (MED22) from Drosophila melanogaster (Fruit fly).